A 435-amino-acid chain; its full sequence is Glutamate-1-semialdehyde 2,1-aminomutase (435 aa).

N6-(pyridoxal phosphate)lysine is present on lysine 266.

It belongs to the class-III pyridoxal-phosphate-dependent aminotransferase family. HemL subfamily. In terms of assembly, homodimer. Requires pyridoxal 5'-phosphate as cofactor.

It is found in the cytoplasm. The catalysed reaction is (S)-4-amino-5-oxopentanoate = 5-aminolevulinate. The protein operates within porphyrin-containing compound metabolism; protoporphyrin-IX biosynthesis; 5-aminolevulinate from L-glutamyl-tRNA(Glu): step 2/2. In Helicobacter hepaticus (strain ATCC 51449 / 3B1), this protein is Glutamate-1-semialdehyde 2,1-aminomutase.